The primary structure comprises 753 residues: Cytoplasmic polyadenylation element-binding protein 3 (753 aa).

The segment at 111 to 286 (VGESTPSSAG…NGSWHGELPP (176 aa)) is disordered. Composition is skewed to basic and acidic residues over residues 131–142 (KPTEKISVDEPP) and 175–188 (FGKEEQKPEPEVVK). The segment covering 227-239 (SPAKISSNSSSSS) has biased composition (low complexity). Residues 265–279 (SRQGLSNRDNLSNGS) are compositionally biased toward polar residues. Residues 298-320 (IFVGGVPWDITEAALKDSFGEFG) enclose the RRM domain. The disordered stretch occupies residues 567–589 (KAYAGPHRRPHLTSNSLSKSHGC). Positions 578 to 589 (LTSNSLSKSHGC) are enriched in polar residues.

Functionally, cytoplasmic polyadenylation element binding protein that binds to and regulates the translation of specific mRNAs. This is Cytoplasmic polyadenylation element-binding protein 3 (cpb-3) from Caenorhabditis briggsae.